The sequence spans 156 residues: Small ribosomal subunit protein uS7 (156 aa).

The protein belongs to the universal ribosomal protein uS7 family. As to quaternary structure, part of the 30S ribosomal subunit. Contacts proteins S9 and S11.

One of the primary rRNA binding proteins, it binds directly to 16S rRNA where it nucleates assembly of the head domain of the 30S subunit. Is located at the subunit interface close to the decoding center, probably blocks exit of the E-site tRNA. The polypeptide is Small ribosomal subunit protein uS7 (Clostridium botulinum (strain 657 / Type Ba4)).